Reading from the N-terminus, the 291-residue chain is GTPase Era (291 aa).

The 166-residue stretch at 2–167 (KSGFVSIIGR…LDEIVKYLDK (166 aa)) folds into the Era-type G domain. The segment at 10–17 (GRTNAGKS) is G1. 10–17 (GRTNAGKS) contacts GTP. Positions 36–40 (NATRR) are G2. The segment at 57–60 (DTPG) is G3. GTP-binding positions include 57 to 61 (DTPGL) and 116 to 119 (NKVD). A G4 region spans residues 116–119 (NKVD). The segment at 146–148 (YSS) is G5. The region spanning 186–274 (YRDFILESIY…LLKLFVTVKK (89 aa)) is the KH type-2 domain.

Belongs to the TRAFAC class TrmE-Era-EngA-EngB-Septin-like GTPase superfamily. Era GTPase family. Monomer.

It localises to the cytoplasm. Its subcellular location is the cell inner membrane. An essential GTPase that binds both GDP and GTP, with rapid nucleotide exchange. Plays a role in 16S rRNA processing and 30S ribosomal subunit biogenesis and possibly also in cell cycle regulation and energy metabolism. The sequence is that of GTPase Era from Campylobacter jejuni subsp. jejuni serotype O:6 (strain 81116 / NCTC 11828).